A 654-amino-acid chain; its full sequence is NADPH-dependent diflavin oxidoreductase 1 (654 aa).

Low complexity predominate over residues 1-10 (MSGSQSSGSP). The disordered stretch occupies residues 1 to 22 (MSGSQSSGSPGSPGPPGPPGRS). A Flavodoxin-like domain is found at 23–167 (ALVVYGSETG…TFIPWLAGFR (145 aa)). FMN contacts are provided by residues 29-34 (SETGNA), 76-79 (STTG), and 114-123 (LGDSSYPKFN). The 251-residue stretch at 235 to 485 (HDSLTATLVQ…QLQRGGLNSS (251 aa)) folds into the FAD-binding FR-type domain. Residues Arg-389, 419–422 (RQFS), and 458–461 (GVCT) each bind FAD. Residues Thr-500, 568–569 (SR), and 574–578 (KVYVQ) contribute to the NADP(+) site. Trp-654 contributes to the FAD binding site.

This sequence belongs to the NADPH-dependent diflavin oxidoreductase NDOR1 family. It in the N-terminal section; belongs to the flavodoxin family. The protein in the C-terminal section; belongs to the flavoprotein pyridine nucleotide cytochrome reductase family. In terms of assembly, interacts with dre2; as part of the cytosolic iron-sulfur (Fe-S) protein assembly (CIA) machinery. Requires FAD as cofactor. FMN is required as a cofactor.

It localises to the cytoplasm. The protein resides in the mitochondrion. The catalysed reaction is 2 oxidized [2Fe-2S]-[protein] + NADPH = 2 reduced [2Fe-2S]-[protein] + NADP(+) + H(+). In terms of biological role, NADPH-dependent reductase which is a central component of the cytosolic iron-sulfur (Fe-S) protein assembly (CIA) machinery. Transfers electrons from NADPH via its FAD and FMN prosthetic groups to the [2Fe-2S] cluster of dre2, another key component of the CIA machinery. In turn, this reduced cluster provides electrons for assembly of cytosolic iron-sulfur cluster proteins. Positively controls H(2)O(2)-induced cell death. The protein is NADPH-dependent diflavin oxidoreductase 1 of Emericella nidulans (strain FGSC A4 / ATCC 38163 / CBS 112.46 / NRRL 194 / M139) (Aspergillus nidulans).